Here is a 241-residue protein sequence, read N- to C-terminus: Pyridoxine 5'-phosphate synthase (241 aa).

Residue Asn-10 coordinates 3-amino-2-oxopropyl phosphate. 12-13 (DH) is a binding site for 1-deoxy-D-xylulose 5-phosphate. Arg-21 is a binding site for 3-amino-2-oxopropyl phosphate. The Proton acceptor role is filled by His-48. 1-deoxy-D-xylulose 5-phosphate contacts are provided by Arg-50 and His-55. Catalysis depends on Glu-75, which acts as the Proton acceptor. Thr-105 lines the 1-deoxy-D-xylulose 5-phosphate pocket. Residue His-195 is the Proton donor of the active site. Residues Gly-196 and 217-218 (GH) contribute to the 3-amino-2-oxopropyl phosphate site.

The protein belongs to the PNP synthase family. In terms of assembly, homooctamer; tetramer of dimers.

The protein resides in the cytoplasm. The enzyme catalyses 3-amino-2-oxopropyl phosphate + 1-deoxy-D-xylulose 5-phosphate = pyridoxine 5'-phosphate + phosphate + 2 H2O + H(+). It participates in cofactor biosynthesis; pyridoxine 5'-phosphate biosynthesis; pyridoxine 5'-phosphate from D-erythrose 4-phosphate: step 5/5. In terms of biological role, catalyzes the complicated ring closure reaction between the two acyclic compounds 1-deoxy-D-xylulose-5-phosphate (DXP) and 3-amino-2-oxopropyl phosphate (1-amino-acetone-3-phosphate or AAP) to form pyridoxine 5'-phosphate (PNP) and inorganic phosphate. This is Pyridoxine 5'-phosphate synthase from Bdellovibrio bacteriovorus (strain ATCC 15356 / DSM 50701 / NCIMB 9529 / HD100).